Consider the following 395-residue polypeptide: Chorismate synthase (395 aa).

NADP(+) is bound by residues arginine 40 and arginine 46. Residues 99–120 (PREGRNAPLSRPRPGHADLTGM) form a disordered region. Residues 134–136 (RSS), 256–257 (QA), glycine 301, 316–320 (KPIPS), and arginine 342 each bind FMN.

The protein belongs to the chorismate synthase family. In terms of assembly, homotetramer. FMNH2 is required as a cofactor.

The enzyme catalyses 5-O-(1-carboxyvinyl)-3-phosphoshikimate = chorismate + phosphate. Its pathway is metabolic intermediate biosynthesis; chorismate biosynthesis; chorismate from D-erythrose 4-phosphate and phosphoenolpyruvate: step 7/7. Catalyzes the anti-1,4-elimination of the C-3 phosphate and the C-6 proR hydrogen from 5-enolpyruvylshikimate-3-phosphate (EPSP) to yield chorismate, which is the branch point compound that serves as the starting substrate for the three terminal pathways of aromatic amino acid biosynthesis. This reaction introduces a second double bond into the aromatic ring system. This is Chorismate synthase from Bifidobacterium longum (strain DJO10A).